The chain runs to 249 residues: Probable transcriptional regulatory protein mll3945 (249 aa).

This sequence belongs to the TACO1 family.

It is found in the cytoplasm. This Mesorhizobium japonicum (strain LMG 29417 / CECT 9101 / MAFF 303099) (Mesorhizobium loti (strain MAFF 303099)) protein is Probable transcriptional regulatory protein mll3945.